Here is a 558-residue protein sequence, read N- to C-terminus: Dihydroxy-acid dehydratase (558 aa).

Mg(2+) is bound at residue Asp-81. Cys-122 is a binding site for [2Fe-2S] cluster. Residues Asp-123 and Lys-124 each coordinate Mg(2+). Residue Lys-124 is modified to N6-carboxylysine. Position 195 (Cys-195) interacts with [2Fe-2S] cluster. A Mg(2+)-binding site is contributed by Glu-447. Ser-473 acts as the Proton acceptor in catalysis.

The protein belongs to the IlvD/Edd family. As to quaternary structure, homodimer. The cofactor is [2Fe-2S] cluster. Mg(2+) is required as a cofactor.

It carries out the reaction (2R)-2,3-dihydroxy-3-methylbutanoate = 3-methyl-2-oxobutanoate + H2O. The enzyme catalyses (2R,3R)-2,3-dihydroxy-3-methylpentanoate = (S)-3-methyl-2-oxopentanoate + H2O. The protein operates within amino-acid biosynthesis; L-isoleucine biosynthesis; L-isoleucine from 2-oxobutanoate: step 3/4. It participates in amino-acid biosynthesis; L-valine biosynthesis; L-valine from pyruvate: step 3/4. In terms of biological role, functions in the biosynthesis of branched-chain amino acids. Catalyzes the dehydration of (2R,3R)-2,3-dihydroxy-3-methylpentanoate (2,3-dihydroxy-3-methylvalerate) into 2-oxo-3-methylpentanoate (2-oxo-3-methylvalerate) and of (2R)-2,3-dihydroxy-3-methylbutanoate (2,3-dihydroxyisovalerate) into 2-oxo-3-methylbutanoate (2-oxoisovalerate), the penultimate precursor to L-isoleucine and L-valine, respectively. This Bacillus pumilus (strain SAFR-032) protein is Dihydroxy-acid dehydratase.